Here is a 490-residue protein sequence, read N- to C-terminus: Betaine aldehyde dehydrogenase (490 aa).

K(+)-binding residues include threonine 26, isoleucine 27, and aspartate 93. 150-152 contributes to the NAD(+) binding site; the sequence is GAW. Lysine 162 serves as the catalytic Charge relay system. 176 to 179 is a binding site for NAD(+); it reads KPSE. Valine 180 is a binding site for K(+). NAD(+) is bound at residue 230–233; sequence GVAS. Leucine 246 contributes to the K(+) binding site. Catalysis depends on glutamate 252, which acts as the Proton acceptor. NAD(+) is bound by residues glycine 254, cysteine 286, and glutamate 387. Cysteine 286 functions as the Nucleophile in the catalytic mechanism. Cysteine sulfenic acid (-SOH) is present on cysteine 286. Positions 457 and 460 each coordinate K(+). Residue glutamate 464 is the Charge relay system of the active site.

It belongs to the aldehyde dehydrogenase family. Dimer of dimers. K(+) serves as cofactor.

The enzyme catalyses betaine aldehyde + NAD(+) + H2O = glycine betaine + NADH + 2 H(+). It functions in the pathway amine and polyamine biosynthesis; betaine biosynthesis via choline pathway; betaine from betaine aldehyde: step 1/1. Functionally, involved in the biosynthesis of the osmoprotectant glycine betaine. Catalyzes the irreversible oxidation of betaine aldehyde to the corresponding acid. This Escherichia coli (strain SMS-3-5 / SECEC) protein is Betaine aldehyde dehydrogenase.